The following is a 243-amino-acid chain: Probable transcriptional regulatory protein LJ_0904 (243 aa).

Residues 1-22 (MSGHSKWHNIQGRKNAQDAKRG) are disordered.

The protein belongs to the TACO1 family.

Its subcellular location is the cytoplasm. The polypeptide is Probable transcriptional regulatory protein LJ_0904 (Lactobacillus johnsonii (strain CNCM I-12250 / La1 / NCC 533)).